The primary structure comprises 229 residues: Ribonuclease T (229 aa).

One can recognise an Exonuclease domain in the interval 23 to 197 (VIIDVETAGF…YDTERTAELF (175 aa)). The Mg(2+) site is built by aspartate 26, glutamate 28, histidine 184, and aspartate 189. Histidine 184 serves as the catalytic Proton donor/acceptor.

It belongs to the RNase T family. Homodimer. It depends on Mg(2+) as a cofactor.

Functionally, trims short 3' overhangs of a variety of RNA species, leaving a one or two nucleotide 3' overhang. Responsible for the end-turnover of tRNA: specifically removes the terminal AMP residue from uncharged tRNA (tRNA-C-C-A). Also appears to be involved in tRNA biosynthesis. This is Ribonuclease T from Haemophilus influenzae (strain PittEE).